The chain runs to 136 residues: Small ribosomal subunit protein eS17A (136 aa).

It belongs to the eukaryotic ribosomal protein eS17 family. In terms of assembly, component of the small ribosomal subunit (SSU). Mature yeast ribosomes consist of a small (40S) and a large (60S) subunit. The 40S small subunit contains 1 molecule of ribosomal RNA (18S rRNA) and 33 different proteins (encoded by 57 genes). The large 60S subunit contains 3 rRNA molecules (25S, 5.8S and 5S rRNA) and 46 different proteins (encoded by 81 genes).

It is found in the cytoplasm. Functionally, component of the ribosome, a large ribonucleoprotein complex responsible for the synthesis of proteins in the cell. The small ribosomal subunit (SSU) binds messenger RNAs (mRNAs) and translates the encoded message by selecting cognate aminoacyl-transfer RNA (tRNA) molecules. The large subunit (LSU) contains the ribosomal catalytic site termed the peptidyl transferase center (PTC), which catalyzes the formation of peptide bonds, thereby polymerizing the amino acids delivered by tRNAs into a polypeptide chain. The nascent polypeptides leave the ribosome through a tunnel in the LSU and interact with protein factors that function in enzymatic processing, targeting, and the membrane insertion of nascent chains at the exit of the ribosomal tunnel. This is Small ribosomal subunit protein eS17A from Saccharomyces cerevisiae (strain ATCC 204508 / S288c) (Baker's yeast).